A 101-amino-acid polypeptide reads, in one-letter code: Small ribosomal subunit protein uS14 (101 aa).

The protein belongs to the universal ribosomal protein uS14 family. As to quaternary structure, part of the 30S ribosomal subunit. Contacts proteins S3 and S10.

Functionally, binds 16S rRNA, required for the assembly of 30S particles and may also be responsible for determining the conformation of the 16S rRNA at the A site. The chain is Small ribosomal subunit protein uS14 from Francisella tularensis subsp. tularensis (strain FSC 198).